The following is a 208-amino-acid chain: Thymidylate kinase (208 aa).

11 to 18 (GTEGVGKT) is a binding site for ATP.

The protein belongs to the thymidylate kinase family.

The enzyme catalyses dTMP + ATP = dTDP + ADP. Functionally, phosphorylation of dTMP to form dTDP in both de novo and salvage pathways of dTTP synthesis. In Psychrobacter sp. (strain PRwf-1), this protein is Thymidylate kinase.